The sequence spans 47 residues: Large ribosomal subunit protein bL34 (47 aa).

The protein belongs to the bacterial ribosomal protein bL34 family.

In Mycobacterium leprae (strain TN), this protein is Large ribosomal subunit protein bL34 (rpmH).